A 316-amino-acid polypeptide reads, in one-letter code: Ornithine carbamoyltransferase (316 aa).

Residues 59 to 62 (STRT), glutamine 86, arginine 110, and 137 to 140 (HPCQ) contribute to the carbamoyl phosphate site. L-ornithine contacts are provided by residues asparagine 168, aspartate 232, and 236–237 (SM). Carbamoyl phosphate is bound by residues 273–274 (CL) and arginine 301.

The protein belongs to the aspartate/ornithine carbamoyltransferase superfamily. OTCase family.

It localises to the cytoplasm. The enzyme catalyses carbamoyl phosphate + L-ornithine = L-citrulline + phosphate + H(+). It functions in the pathway amino-acid biosynthesis; L-arginine biosynthesis; L-arginine from L-ornithine and carbamoyl phosphate: step 1/3. Functionally, reversibly catalyzes the transfer of the carbamoyl group from carbamoyl phosphate (CP) to the N(epsilon) atom of ornithine (ORN) to produce L-citrulline. The chain is Ornithine carbamoyltransferase (argF) from Listeria monocytogenes serovar 1/2a (strain ATCC BAA-679 / EGD-e).